The following is a 455-amino-acid chain: Oxidative stress induced growth inhibitor homolog osgn-1 (455 aa).

The protein belongs to the OKL38 family. It depends on NADPH as a cofactor.

Its subcellular location is the midbody. In terms of biological role, monooxygenase catalytic activity. Involved in regulation of cytokinesis; promotes rho-1/RhoA activity, probably acting locally at the midbody in late cytokinesis. Monooxygenase activity is required to stabilize structures between primordial germ cells (PGCs), termed intercellular bridges. Dispensable for fertility. The polypeptide is Oxidative stress induced growth inhibitor homolog osgn-1 (Caenorhabditis elegans).